The following is a 796-amino-acid chain: Protocadherin beta-3 (796 aa).

An N-terminal signal peptide occupies residues 1–26 (MEAGGERFLRQRQVLLLFVFLGGSLA). Topologically, residues 27-690 (GSESRRYSVA…AQADLLTVYL (664 aa)) are extracellular. Cadherin domains follow at residues 35 to 133 (VAEE…SPVF), 138 to 242 (MHLK…APEF), 247 to 347 (YEVA…PPEL), 352 to 451 (VNSP…APAF), and 456 to 561 (YTLF…SPFV). N-linked (GlcNAc...) asparagine glycosylation occurs at N169. 2 N-linked (GlcNAc...) asparagine glycosylation sites follow: N418 and N436. N567 carries N-linked (GlcNAc...) asparagine glycosylation. Residues 568-671 (GSAPCTELVP…LVDGFSQPYL (104 aa)) form the Cadherin 6 domain. Residues 691-711 (VVALASVSSLFLFSVLLFVAV) traverse the membrane as a helical segment. At 712 to 796 (RLCRRSRAAS…PSFRKSFEFS (85 aa)) the chain is on the cytoplasmic side.

It is found in the cell membrane. Functionally, potential calcium-dependent cell-adhesion protein. May be involved in the establishment and maintenance of specific neuronal connections in the brain. The protein is Protocadherin beta-3 (PCDHB3) of Pan troglodytes (Chimpanzee).